Here is a 428-residue protein sequence, read N- to C-terminus: Tyrosine--tRNA ligase (428 aa).

Tyr41 is an L-tyrosine binding site. Positions 46–55 (PTADSLHLGH) match the 'HIGH' region motif. L-tyrosine contacts are provided by Tyr179 and Gln183. Positions 239–243 (KFGKT) match the 'KMSKS' region motif. Lys242 lines the ATP pocket. Positions 361–418 (ADLMQALVDSELQPSRGQARKTIASNAITINGEKQSDPEYTFSDSDRLFGRYTLLRRG) constitute an S4 RNA-binding domain.

This sequence belongs to the class-I aminoacyl-tRNA synthetase family. TyrS type 1 subfamily. In terms of assembly, homodimer.

The protein resides in the cytoplasm. It carries out the reaction tRNA(Tyr) + L-tyrosine + ATP = L-tyrosyl-tRNA(Tyr) + AMP + diphosphate + H(+). Its function is as follows. Catalyzes the attachment of tyrosine to tRNA(Tyr) in a two-step reaction: tyrosine is first activated by ATP to form Tyr-AMP and then transferred to the acceptor end of tRNA(Tyr). In Cronobacter sakazakii (strain ATCC BAA-894) (Enterobacter sakazakii), this protein is Tyrosine--tRNA ligase.